We begin with the raw amino-acid sequence, 191 residues long: UPF0312 protein Sbal195_3198 (191 aa).

Positions 1 to 22 (MKKQLFSALIGASLLAPMAASA) are cleaved as a signal peptide.

It belongs to the UPF0312 family. Type 1 subfamily.

It is found in the periplasm. In Shewanella baltica (strain OS195), this protein is UPF0312 protein Sbal195_3198.